Here is a 106-residue protein sequence, read N- to C-terminus: ATP-dependent Clp protease adapter protein ClpS (106 aa).

Belongs to the ClpS family. As to quaternary structure, binds to the N-terminal domain of the chaperone ClpA.

Involved in the modulation of the specificity of the ClpAP-mediated ATP-dependent protein degradation. The chain is ATP-dependent Clp protease adapter protein ClpS from Methylococcus capsulatus (strain ATCC 33009 / NCIMB 11132 / Bath).